A 1080-amino-acid polypeptide reads, in one-letter code: Isoleucine--tRNA ligase (1080 aa).

The short motif at 48–58 (PYASGSIHLGT) is the 'HIGH' region element. Positions 628 to 632 (KMSKS) match the 'KMSKS' region motif. Residue Lys631 coordinates ATP.

The protein belongs to the class-I aminoacyl-tRNA synthetase family. IleS type 2 subfamily. As to quaternary structure, monomer. Zn(2+) serves as cofactor.

The protein localises to the cytoplasm. The catalysed reaction is tRNA(Ile) + L-isoleucine + ATP = L-isoleucyl-tRNA(Ile) + AMP + diphosphate. In terms of biological role, catalyzes the attachment of isoleucine to tRNA(Ile). As IleRS can inadvertently accommodate and process structurally similar amino acids such as valine, to avoid such errors it has two additional distinct tRNA(Ile)-dependent editing activities. One activity is designated as 'pretransfer' editing and involves the hydrolysis of activated Val-AMP. The other activity is designated 'posttransfer' editing and involves deacylation of mischarged Val-tRNA(Ile). In Methanopyrus kandleri (strain AV19 / DSM 6324 / JCM 9639 / NBRC 100938), this protein is Isoleucine--tRNA ligase.